The following is a 324-amino-acid chain: Transcription factor TCP24 (324 aa).

The TCP domain maps to 50 to 108 (GKDRHSKVLTSKGLRDRRIRLSVATAIQFYDLQDRLGFDQPSKAVEWLINAASDSITDL). Disordered regions lie at residues 122–215 (QNQT…PMNH) and 261–297 (QRSS…NHQL). The segment covering 127 to 142 (SACSSGTSESSLLSLS) has biased composition (low complexity). In terms of domain architecture, R spans 144-162 (TEIRGKARERARERTAKDR). Residues 144 to 167 (TEIRGKARERARERTAKDRDKDLQ) show a composition bias toward basic and acidic residues. 2 stretches are compositionally biased toward polar residues: residues 168–192 (NAHS…NWTG) and 200–212 (VQLQ…SQEP). The span at 261-281 (QRSSISSSSSSSSPMDSQSIS) shows a compositional bias: low complexity.

Forms a heterodimeric complex with ABAP1. Interacts with SPL. Expressed in cotyledons, particularly in the vascular region, in leaves, roots, stems, buds, flowers and siliques.

The protein localises to the nucleus. Functionally, plays a pivotal role in the control of morphogenesis of shoot organs by negatively regulating the expression of boundary-specific genes such as CUC genes, probably through the induction of miRNA (e.g. miR164). In association with ABAP1, exerts a negative role in cell proliferation in leaves, possibly by inhibiting mitotic DNA replication. Participates in ovule development. The chain is Transcription factor TCP24 (TCP24) from Arabidopsis thaliana (Mouse-ear cress).